Reading from the N-terminus, the 68-residue chain is Conotoxin Ar5.3 (68 aa).

Residues 1–19 form the signal peptide; that stretch reads MLCLPVFIILLLLASPAAS. Positions 20–53 are excised as a propeptide; sequence NPLEKRIQNDLIRAALEDADMENDPRSIIDSVKT.

This sequence belongs to the conotoxin T superfamily. Post-translationally, contains 2 disulfide bonds that can be either 'C1-C3, C2-C4' or 'C1-C4, C2-C3', since these disulfide connectivities have been observed for conotoxins with cysteine framework V (for examples, see AC P0DQQ7 and AC P81755). In terms of tissue distribution, expressed by the venom duct.

The protein resides in the secreted. This is Conotoxin Ar5.3 from Conus arenatus (Sand-dusted cone).